The following is an 89-amino-acid chain: Small ribosomal subunit protein uS15 (89 aa).

This sequence belongs to the universal ribosomal protein uS15 family. In terms of assembly, part of the 30S ribosomal subunit. Forms a bridge to the 50S subunit in the 70S ribosome, contacting the 23S rRNA.

Functionally, one of the primary rRNA binding proteins, it binds directly to 16S rRNA where it helps nucleate assembly of the platform of the 30S subunit by binding and bridging several RNA helices of the 16S rRNA. Its function is as follows. Forms an intersubunit bridge (bridge B4) with the 23S rRNA of the 50S subunit in the ribosome. This is Small ribosomal subunit protein uS15 from Rhizobium meliloti (strain 1021) (Ensifer meliloti).